The chain runs to 451 residues: C4-dicarboxylate transport protein (451 aa).

A run of 9 helical transmembrane segments spans residues Ser17–Pro37, Leu53–Met73, Leu85–Val105, Ala153–Leu173, Val193–Met213, Leu231–Ala251, Gly306–Ala326, Ile339–Gly359, and Ile361–Ile381.

This sequence belongs to the dicarboxylate/amino acid:cation symporter (DAACS) (TC 2.A.23) family.

It is found in the cell inner membrane. Its function is as follows. Responsible for the transport of dicarboxylates such as succinate, fumarate, and malate from the periplasm across the membrane. In Paracidovorax citrulli (strain AAC00-1) (Acidovorax citrulli), this protein is C4-dicarboxylate transport protein.